The sequence spans 430 residues: MSTGSHSPEAMWSATNFRRHQRKPNQVLHRWFFKGSAWIIYAIACGLHFFKLHYNERTNQVEESQYHRIWSKIVVVLKVILLASPYLQYFVLGLGIYIHITLVQDSKAQNFLMSLIVLGIVIGVLRRLLIFLHLKRDRRFLKHTVNEILHITSALEQKFGMEYKCDSTLLVVYLAKLWILTVMLDSLWYKPYFLSSIFLYWVLLEYCFAGYFIYQLILLSWYHTIILFLQRFIEDHANRLDIELHYHRRLIPLFELHLRINNLHKHVRDNVSWLSTSVYLMIFTCIFNAELLIECSLFAGDELENKIYIITDGCLGPVCVPILYVLILGMCTDRFRDAEVQLQQLFVIVQGLYMRKVRPHLLIAMVLENEHTSLIIHQKLKPLENMIILDITCDREFVMDYIVTVILTALSLVQYTISTGGNISECVTHK.

Over 1-31 (MSTGSHSPEAMWSATNFRRHQRKPNQVLHRW) the chain is Cytoplasmic. The chain crosses the membrane as a helical span at residues 32–52 (FFKGSAWIIYAIACGLHFFKL). The Extracellular portion of the chain corresponds to 53–79 (HYNERTNQVEESQYHRIWSKIVVVLKV). Residues 80 to 100 (ILLASPYLQYFVLGLGIYIHI) traverse the membrane as a helical segment. Over 101–110 (TLVQDSKAQN) the chain is Cytoplasmic. Residues 111–131 (FLMSLIVLGIVIGVLRRLLIF) traverse the membrane as a helical segment. Residues 132–168 (LHLKRDRRFLKHTVNEILHITSALEQKFGMEYKCDST) are Extracellular-facing. The chain crosses the membrane as a helical span at residues 169–189 (LLVVYLAKLWILTVMLDSLWY). The Cytoplasmic segment spans residues 190–277 (KPYFLSSIFL…RDNVSWLSTS (88 aa)). The helical transmembrane segment at 278 to 298 (VYLMIFTCIFNAELLIECSLF) threads the bilayer. The Extracellular portion of the chain corresponds to 299-306 (AGDELENK). Residues 307–327 (IYIITDGCLGPVCVPILYVLI) traverse the membrane as a helical segment. The Cytoplasmic segment spans residues 328–396 (LGMCTDRFRD…IILDITCDRE (69 aa)). The chain crosses the membrane as a helical span at residues 397 to 417 (FVMDYIVTVILTALSLVQYTI). Topologically, residues 418-430 (STGGNISECVTHK) are extracellular. An N-linked (GlcNAc...) asparagine glycan is attached at Asn422.

It is found in the cell membrane. This chain is Gustatory receptor-like 43a, found in Drosophila melanogaster (Fruit fly).